Reading from the N-terminus, the 535-residue chain is MKTKFIFITGGVVSSIGKGLAAASLGALLEARGLRVTLQKLDPYINVDPGTMSPFQHGEVFVTDDGAETDLDLGHYERFTNARLSKKSNFTTGQVYFSVIDKERRGDYLGGTVQVIPHITDEMKCKIIENAKGADVAIVEVGGTVGDIESLPFLEAIRQFRFDRGAGNTLYVHVTLVPYIRTAGELKTKPTQHSVMELRKIGIQPDILLCRSEREIPQEMKNKIALFCNVDVKDVIPVVDSEHIYYVPLALSKERLDERVVEKLNIWTKAPDLTPWQDVVETVCHPGHGEVRIAIVGKYVNLTESYKSLSEALTHGGIANDCRVSLKYIDSEKIERDGIDGHLVDMDAVLVPGGFGERGTEGKVMAIEYARLHKIPFFGICLGMQMAVVEYARNVCHIDDACSSEFKKGCGNPVIHLMEEQKSVSKKGGTMRLGGYPCSLEKGTLAHVAYNAQEISERHRHRYEFNNAYREVLTKNGLILSGIYRDKDLVEVVEIADHPWFLGCQFHPEFKSKPLAPHPLFKSFVRAALIQRDAR.

The amidoligase domain stretch occupies residues 1-266; the sequence is MKTKFIFITG…DERVVEKLNI (266 aa). Ser14 contributes to the CTP binding site. Ser14 is a binding site for UTP. ATP is bound by residues 15-20 and Asp72; that span reads SIGKGL. Mg(2+)-binding residues include Asp72 and Glu140. CTP is bound by residues 147-149, 187-192, and Lys223; these read DIE and KTKPTQ. UTP-binding positions include 187–192 and Lys223; that span reads KTKPTQ. Positions 292 to 534 constitute a Glutamine amidotransferase type-1 domain; that stretch reads RIAIVGKYVN…VRAALIQRDA (243 aa). Residue Gly354 coordinates L-glutamine. Cys381 (nucleophile; for glutamine hydrolysis) is an active-site residue. L-glutamine is bound by residues 382-385, Glu405, and Arg462; that span reads LGMQ. Active-site residues include His507 and Glu509.

It belongs to the CTP synthase family. As to quaternary structure, homotetramer.

The catalysed reaction is UTP + L-glutamine + ATP + H2O = CTP + L-glutamate + ADP + phosphate + 2 H(+). It catalyses the reaction L-glutamine + H2O = L-glutamate + NH4(+). The enzyme catalyses UTP + NH4(+) + ATP = CTP + ADP + phosphate + 2 H(+). It functions in the pathway pyrimidine metabolism; CTP biosynthesis via de novo pathway; CTP from UDP: step 2/2. Its activity is regulated as follows. Allosterically activated by GTP, when glutamine is the substrate; GTP has no effect on the reaction when ammonia is the substrate. The allosteric effector GTP functions by stabilizing the protein conformation that binds the tetrahedral intermediate(s) formed during glutamine hydrolysis. Inhibited by the product CTP, via allosteric rather than competitive inhibition. Catalyzes the ATP-dependent amination of UTP to CTP with either L-glutamine or ammonia as the source of nitrogen. Regulates intracellular CTP levels through interactions with the four ribonucleotide triphosphates. This is CTP synthase from Pelobacter propionicus (strain DSM 2379 / NBRC 103807 / OttBd1).